The primary structure comprises 104 residues: Large ribosomal subunit protein uL23 (104 aa).

The protein belongs to the universal ribosomal protein uL23 family. As to quaternary structure, part of the 50S ribosomal subunit. Contacts protein L29, and trigger factor when it is bound to the ribosome.

Its function is as follows. One of the early assembly proteins it binds 23S rRNA. One of the proteins that surrounds the polypeptide exit tunnel on the outside of the ribosome. Forms the main docking site for trigger factor binding to the ribosome. The sequence is that of Large ribosomal subunit protein uL23 from Polynucleobacter asymbioticus (strain DSM 18221 / CIP 109841 / QLW-P1DMWA-1) (Polynucleobacter necessarius subsp. asymbioticus).